The following is a 373-amino-acid chain: 3 beta-hydroxysteroid dehydrogenase/Delta 5--&gt;4-isomerase type 3 (373 aa).

Catalysis depends on Y155, which acts as the Proton acceptor. An NAD(+)-binding site is contributed by K159. The helical transmembrane segment at 288 to 308 (VPILYWLAFLLETVSFLLSPI) threads the bilayer.

Belongs to the 3-beta-HSD family. In terms of tissue distribution, liver and kidney. Greater expression in liver.

It is found in the endoplasmic reticulum membrane. Its subcellular location is the mitochondrion membrane. The catalysed reaction is a 3beta-hydroxy-Delta(5)-steroid + NAD(+) = a 3-oxo-Delta(5)-steroid + NADH + H(+). It catalyses the reaction a 3-oxo-Delta(5)-steroid = a 3-oxo-Delta(4)-steroid. It functions in the pathway lipid metabolism; steroid biosynthesis. In terms of biological role, 3-beta-HSD is a bifunctional enzyme, that catalyzes the oxidative conversion of Delta(5)-ene-3-beta-hydroxy steroid, and the oxidative conversion of ketosteroids. The 3-beta-HSD enzymatic system plays a crucial role in the biosynthesis of all classes of hormonal steroids. The sequence is that of 3 beta-hydroxysteroid dehydrogenase/Delta 5--&gt;4-isomerase type 3 (Hsd3b3) from Mus musculus (Mouse).